A 158-amino-acid polypeptide reads, in one-letter code: Probable cyclic pyranopterin monophosphate synthase (158 aa).

Substrate-binding positions include 75–77 (MCH) and 111–112 (ME). Residue aspartate 126 is part of the active site.

Belongs to the MoaC family. Homohexamer; trimer of dimers.

It carries out the reaction (8S)-3',8-cyclo-7,8-dihydroguanosine 5'-triphosphate = cyclic pyranopterin phosphate + diphosphate. It functions in the pathway cofactor biosynthesis; molybdopterin biosynthesis. Functionally, catalyzes the conversion of (8S)-3',8-cyclo-7,8-dihydroguanosine 5'-triphosphate to cyclic pyranopterin monophosphate (cPMP). The protein is Probable cyclic pyranopterin monophosphate synthase of Methanocorpusculum labreanum (strain ATCC 43576 / DSM 4855 / Z).